Reading from the N-terminus, the 757-residue chain is Catalase-peroxidase (757 aa).

Residues 101-248 (WHSAGTYRIG…LAAVQMGLIY (148 aa)) constitute a cross-link (tryptophyl-tyrosyl-methioninium (Trp-Tyr) (with M-274)). Catalysis depends on histidine 102, which acts as the Proton acceptor. The interval 213-232 (VHHPDEHRGAKEKASKNSDS) is disordered. The segment at residues 248–274 (YVNPEGPDGCPDPLASARDIRETFARM) is a cross-link (tryptophyl-tyrosyl-methioninium (Tyr-Met) (with W-101)). Heme b is bound at residue histidine 289.

This sequence belongs to the peroxidase family. Peroxidase/catalase subfamily. As to quaternary structure, homodimer or homotetramer. It depends on heme b as a cofactor. In terms of processing, formation of the three residue Trp-Tyr-Met cross-link is important for the catalase, but not the peroxidase activity of the enzyme.

It catalyses the reaction H2O2 + AH2 = A + 2 H2O. It carries out the reaction 2 H2O2 = O2 + 2 H2O. Its function is as follows. Bifunctional enzyme with both catalase and broad-spectrum peroxidase activity. This chain is Catalase-peroxidase, found in Xylella fastidiosa (strain M23).